Here is a 274-residue protein sequence, read N- to C-terminus: Thiamine kinase (274 aa).

The protein belongs to the thiamine kinase family.

The catalysed reaction is thiamine + ATP = thiamine phosphate + ADP + H(+). It functions in the pathway cofactor biosynthesis; thiamine diphosphate biosynthesis; thiamine phosphate from thiamine: step 1/1. Its function is as follows. Catalyzes the ATP-dependent phosphorylation of thiamine to thiamine phosphate. Is involved in thiamine salvage. The polypeptide is Thiamine kinase (Escherichia coli (strain SMS-3-5 / SECEC)).